The primary structure comprises 721 residues: Putative cullin-like protein 1 (721 aa).

Positions 651 to 713 (DRRYAIDAAL…RDYLERDTEN (63 aa)) constitute a Cullin neddylation domain.

The protein belongs to the cullin family.

This chain is Putative cullin-like protein 1, found in Arabidopsis thaliana (Mouse-ear cress).